An 881-amino-acid polypeptide reads, in one-letter code: DNA replication helicase (881 aa).

Residue 90-97 (GNAGSGKS) participates in ATP binding.

It belongs to the herpesviridae helicase family. In terms of assembly, associates with the primase and the primase-associated factor to form the helicase-primase complex.

Its subcellular location is the host nucleus. Its function is as follows. Component of the helicase/primase complex. Unwinds the DNA at the replication forks and generates single-stranded DNA for both leading and lagging strand synthesis. The primase synthesizes short RNA primers on the lagging strand that the polymerase elongates using dNTPs. Possesses helicase-like motifs and therefore may act as the helicase subunit of the complex. The polypeptide is DNA replication helicase (Homo sapiens (Human)).